A 413-amino-acid chain; its full sequence is Gamma-glutamyl phosphate reductase (413 aa).

It belongs to the gamma-glutamyl phosphate reductase family.

It is found in the cytoplasm. The catalysed reaction is L-glutamate 5-semialdehyde + phosphate + NADP(+) = L-glutamyl 5-phosphate + NADPH + H(+). Its pathway is amino-acid biosynthesis; L-proline biosynthesis; L-glutamate 5-semialdehyde from L-glutamate: step 2/2. Its function is as follows. Catalyzes the NADPH-dependent reduction of L-glutamate 5-phosphate into L-glutamate 5-semialdehyde and phosphate. The product spontaneously undergoes cyclization to form 1-pyrroline-5-carboxylate. This chain is Gamma-glutamyl phosphate reductase, found in Lactococcus lactis subsp. lactis (strain IL1403) (Streptococcus lactis).